Consider the following 489-residue polypeptide: tRNA(Ile)-lysidine synthase (489 aa).

Residue 35–40 (SGGLDS) coordinates ATP.

This sequence belongs to the tRNA(Ile)-lysidine synthase family.

The protein localises to the cytoplasm. It catalyses the reaction cytidine(34) in tRNA(Ile2) + L-lysine + ATP = lysidine(34) in tRNA(Ile2) + AMP + diphosphate + H(+). Its function is as follows. Ligates lysine onto the cytidine present at position 34 of the AUA codon-specific tRNA(Ile) that contains the anticodon CAU, in an ATP-dependent manner. Cytidine is converted to lysidine, thus changing the amino acid specificity of the tRNA from methionine to isoleucine. This Burkholderia pseudomallei (strain K96243) protein is tRNA(Ile)-lysidine synthase.